Consider the following 909-residue polypeptide: GTPase activating protein homolog 4 (909 aa).

The F-BAR domain occupies 1–257 (MASLIGSAKL…PTPDFQFESC (257 aa)). Residues 322 to 513 (IPIEEIMFKQ…LIIEGYLKLS (192 aa)) enclose the Rho-GAP domain. The tract at residues 529 to 909 (IPSFSNNNNN…QRVPPPPSQS (381 aa)) is disordered. 2 stretches are compositionally biased toward low complexity: residues 533–562 (SNNN…ITTN) and 571–602 (SSTT…TPQQ). Pro residues predominate over residues 609-625 (SYQPPQPPPTMAPPPLF). Residues 651-674 (QYTQSSSNLPPIQLGVTNSPSKPQ) show a composition bias toward polar residues. Residues 672 to 809 (KPQLSDKQKE…QQLQQQSNGS (138 aa)) adopt a coiled-coil conformation. Basic and acidic residues predominate over residues 675-716 (LSDKQKEKEKEKEKEKEKEKEREKEKEKEKEKEKEKEKEKEK). A compositionally biased stretch (low complexity) spans 723–741 (SSSTSPNSSSLSISNFLSS). Residues 742–765 (NKDKDKEKDKEKEKEKEKEKDKEI) show a composition bias toward basic and acidic residues. Positions 767–785 (ATNSTPEKPVSNRMSLIFS) are enriched in polar residues. Low complexity-rich tracts occupy residues 786-828 (QQLQ…MSPS) and 843-892 (SGTS…ELKS).

The protein localises to the cytoplasm. The protein resides in the contractile vacuole. Functionally, rho GTPase-activating protein involved in the signal transduction pathway. The sequence is that of GTPase activating protein homolog 4 (mgp4) from Dictyostelium discoideum (Social amoeba).